The following is a 387-amino-acid chain: Succinate--CoA ligase [ADP-forming] subunit beta (387 aa).

The 228-residue stretch at 9-236 (KELFAKHNVP…RDATDPLELK (228 aa)) folds into the ATP-grasp domain. Residues Lys-45, 52 to 54 (GRG), Ser-94, and Glu-99 contribute to the ATP site. Positions 191 and 205 each coordinate Mg(2+). Residues Asn-256 and 318-320 (GIT) contribute to the substrate site.

This sequence belongs to the succinate/malate CoA ligase beta subunit family. Heterotetramer of two alpha and two beta subunits. It depends on Mg(2+) as a cofactor.

The catalysed reaction is succinate + ATP + CoA = succinyl-CoA + ADP + phosphate. The enzyme catalyses GTP + succinate + CoA = succinyl-CoA + GDP + phosphate. It functions in the pathway carbohydrate metabolism; tricarboxylic acid cycle; succinate from succinyl-CoA (ligase route): step 1/1. Its function is as follows. Succinyl-CoA synthetase functions in the citric acid cycle (TCA), coupling the hydrolysis of succinyl-CoA to the synthesis of either ATP or GTP and thus represents the only step of substrate-level phosphorylation in the TCA. The beta subunit provides nucleotide specificity of the enzyme and binds the substrate succinate, while the binding sites for coenzyme A and phosphate are found in the alpha subunit. In Mycobacterium sp. (strain JLS), this protein is Succinate--CoA ligase [ADP-forming] subunit beta.